The sequence spans 402 residues: Candidapepsin-1 (402 aa).

A signal peptide (or 18, or 21) is located at residues 1 to 25 (MVAIVTLTRQVLLTIALALFAQGAA). The propeptide at 26-62 (IPEEAAKRDDNPGFVALDFDVLRKPLNLTEALLREKR) is activation peptide. The N-linked (GlcNAc...) asparagine glycan is linked to asparagine 52. In terms of domain architecture, Peptidase A1 spans 76–389 (YASKVSVGSN…NLDANTISIA (314 aa)). Aspartate 94 is an active-site residue. The cysteines at positions 109 and 115 are disulfide-linked. The active site involves aspartate 282. A disulfide bridge connects residues cysteine 320 and cysteine 354.

Belongs to the peptidase A1 family. Post-translationally, O-glycosylated.

It is found in the secreted. The catalysed reaction is Preferential cleavage at the carboxyl of hydrophobic amino acids, but fails to cleave 15-Leu-|-Tyr-16, 16-Tyr-|-Leu-17 and 24-Phe-|-Phe-25 of insulin B chain. Activates trypsinogen, and degrades keratin.. This is Candidapepsin-1 (SAPP1) from Candida parapsilosis (Yeast).